A 577-amino-acid chain; its full sequence is Gamma-tubulin complex component gfh1 (577 aa).

This sequence belongs to the TUBGCP family.

It is found in the cytoplasm. It localises to the cytoskeleton. The protein resides in the microtubule organizing center. Its subcellular location is the spindle pole body. In terms of biological role, required for proper anchoring of astral microtubules at the spindle pole bodies (SPBs), during anaphase, ensuring correct cell polarity. This Schizosaccharomyces pombe (strain 972 / ATCC 24843) (Fission yeast) protein is Gamma-tubulin complex component gfh1 (gfh1).